The sequence spans 445 residues: Rab GDP dissociation inhibitor beta (445 aa).

Methionine 1 bears the N-acetylmethionine mark. Lysine 57 is subject to N6-succinyllysine. N6-acetyllysine is present on lysine 112. Position 130 is a phosphoserine (serine 130). Lysine 269 is subject to N6-acetyllysine. Residue serine 382 is modified to Phosphoserine.

This sequence belongs to the Rab GDI family. Interacts with RHOH. Interacts with the GDP-bound inactive forms of RAB3A, RAB3B, RAB3C, RAB5A, RAB5B, RAB5C, RAB8A, RAB8B, RAB10, RAB12, RAB35, and RAB43; binds RAB3D to a lesser extent. Interacts with DZIP1; this interaction negatively regulates the interaction of GDI2 with GDP-bound RAB8A.

Its subcellular location is the cytoplasm. It localises to the membrane. The protein resides in the golgi apparatus. It is found in the trans-Golgi network. In terms of biological role, GDP-dissociation inhibitor preventing the GDP to GTP exchange of most Rab proteins. By keeping these small GTPases in their inactive GDP-bound form regulates intracellular membrane trafficking. Negatively regulates protein transport to the cilium and ciliogenesis through the inhibition of RAB8A. In Canis lupus familiaris (Dog), this protein is Rab GDP dissociation inhibitor beta (GDI2).